A 94-amino-acid polypeptide reads, in one-letter code: Large ribosomal subunit protein uL29 (94 aa).

A disordered region spans residues 65 to 94 (ANPGERKSRVFSRAKRKKKNLARLSAKAKG). Residues 73 to 94 (RVFSRAKRKKKNLARLSAKAKG) are compositionally biased toward basic residues.

This sequence belongs to the universal ribosomal protein uL29 family.

The protein is Large ribosomal subunit protein uL29 of Leptospira interrogans serogroup Icterohaemorrhagiae serovar copenhageni (strain Fiocruz L1-130).